The following is a 287-amino-acid chain: Homoserine kinase (287 aa).

An ATP-binding site is contributed by Pro-79–Ser-89.

Belongs to the GHMP kinase family. Homoserine kinase subfamily.

The protein localises to the cytoplasm. The catalysed reaction is L-homoserine + ATP = O-phospho-L-homoserine + ADP + H(+). The protein operates within amino-acid biosynthesis; L-threonine biosynthesis; L-threonine from L-aspartate: step 4/5. In terms of biological role, catalyzes the ATP-dependent phosphorylation of L-homoserine to L-homoserine phosphate. This is Homoserine kinase from Enterococcus faecalis (strain ATCC 700802 / V583).